A 1343-amino-acid polypeptide reads, in one-letter code: DNA-directed RNA polymerase subunit beta (1343 aa).

It belongs to the RNA polymerase beta chain family. In terms of assembly, the RNAP catalytic core consists of 2 alpha, 1 beta, 1 beta' and 1 omega subunit. When a sigma factor is associated with the core the holoenzyme is formed, which can initiate transcription.

The catalysed reaction is RNA(n) + a ribonucleoside 5'-triphosphate = RNA(n+1) + diphosphate. Functionally, DNA-dependent RNA polymerase catalyzes the transcription of DNA into RNA using the four ribonucleoside triphosphates as substrates. The protein is DNA-directed RNA polymerase subunit beta of Buchnera aphidicola subsp. Cinara cedri (strain Cc).